Here is a 399-residue protein sequence, read N- to C-terminus: Interferon regulatory factor 9 (399 aa).

Residues 9–116 constitute a DNA-binding region (IRF tryptophan pentad repeat); that stretch reads TRKLRSWIVE…EPYKVYRILP (108 aa). Residues 118 to 189 are disordered; it reads GTLPNQPRNQ…CNSELEEGAG (72 aa). A compositionally biased stretch (polar residues) spans 120 to 129; the sequence is LPNQPRNQKS. At serine 139 the chain carries Phosphoserine. Over residues 148–157 the composition is skewed to polar residues; the sequence is NGRTNGVVNH. A compositionally biased stretch (low complexity) spans 171–189; the sequence is SNRSDSNSNCNSELEEGAG. Position 393 is a phosphoserine (serine 393).

Belongs to the IRF family. Interacts with STAT2 in the cytoplasm. Forms the interferon-stimulated gene factor 3 complex (ISGF3) with the heterodimer STAT1:STAT2; upon stimulation.

The protein localises to the nucleus. In terms of biological role, transcription factor that plays an essential role in anti-viral immunity. It mediates signaling by type I IFNs (IFN-alpha and IFN-beta). Following type I IFN binding to cell surface receptors, Jak kinases (TYK2 and JAK1) are activated, leading to tyrosine phosphorylation of STAT1 and STAT2. IRF9/ISGF3G associates with the phosphorylated STAT1:STAT2 dimer to form a complex termed ISGF3 transcription factor, that enters the nucleus. ISGF3 binds to the IFN stimulated response element (ISRE) to activate the transcription of interferon stimulated genes, which drive the cell in an antiviral state. In Mus musculus (Mouse), this protein is Interferon regulatory factor 9 (Irf9).